Consider the following 153-residue polypeptide: UPF0266 membrane protein SG1324 (153 aa).

3 consecutive transmembrane segments (helical) span residues 6-26 (IGLVIMIVIALLFAVFDEFIV), 46-66 (LDGLIFIVLLLILLYKNITTD), and 68-88 (KVMTSTLILFLGLMVIYLAYI).

This sequence belongs to the UPF0266 family.

It is found in the cell inner membrane. The chain is UPF0266 membrane protein SG1324 from Sodalis glossinidius (strain morsitans).